Reading from the N-terminus, the 1185-residue chain is Mucin-6 (1185 aa).

Cystine bridges form between C1/C132 and C23/C168. Residues 1–169 (CSTWGGGHFS…KMDDPSEICL (169 aa)) form the VWFD 1 domain. The N-linked (GlcNAc...) (complex) asparagine glycan is linked to N223. A TIL 1 domain is found at 257-312 (CSANQIYEECGSPCIKTCSNPEYSCSSHCTYGCFCPEGTVLDDISKNRTCVHLEQC). The 185-residue stretch at 350 to 534 (GRCSLEGGSF…AMERETDPCA (185 aa)) folds into the VWFD 2 domain. Disulfide bonds link C352–C488 and C374–C533. 2 TIL domains span residues 619 to 676 (CTGN…KSHC) and 737 to 782 (GATC…PEEC). In terms of domain architecture, VWFD 3 spans 821–993 (STCNLYGEGH…NSWKENPLCG (173 aa)). Cystine bridges form between C823–C957, C845–C992, C854–C954, and C872–C879. An N-linked (GlcNAc...) (complex) asparagine glycan is attached at N930. Over residues 1160–1178 (PTATQPTSPSTSSASTVLT) the composition is skewed to low complexity. The disordered stretch occupies residues 1160–1185 (PTATQPTSPSTSSASTVLTETTNPPV).

In terms of assembly, multimer; disulfide-linked. Post-translationally, N-glycosylated with N-acetylglucosamine (6.7%), N-acetylgalactosamine (0.6%), galactose (1.8%), mannose (4.6%), N-acetylneuraminic acid (1.0%) and sulfate-containing glycans (0.7%).

Its subcellular location is the secreted. Functionally, ovomucin, the glycoprotein responsible for the gel properties of egg white, is composed for 2 subunits, alpha-ovomucin/MUC5B and beta-ovomucin/MUC6. This chain is Mucin-6 (MUC6), found in Gallus gallus (Chicken).